The chain runs to 115 residues: UPF0738 protein SACOL1009 (115 aa).

The protein belongs to the UPF0738 family.

This Staphylococcus aureus (strain COL) protein is UPF0738 protein SACOL1009.